The chain runs to 557 residues: Selenoprotein N (557 aa).

Residues 1–21 show a composition bias toward basic and acidic residues; sequence MAADVDKTPAGEQKDDHEDRG. The interval 1–28 is disordered; that stretch reads MAADVDKTPAGEQKDDHEDRGTPSSRRG. The chain crosses the membrane as a helical span at residues 35-55; the sequence is ISSLFIIAAIPVIGVCIKYYL. Position 430 (selenocysteine 430) is a non-standard amino acid, selenocysteine. N-linked (GlcNAc...) asparagine glycosylation is found at asparagine 451 and asparagine 499.

In terms of assembly, interacts with ryr3.

The protein localises to the endoplasmic reticulum membrane. Its function is as follows. Plays an important role in cell protection against oxidative stress and in the regulation of redox-related calcium homeostasis. Regulates the calcium level of the ER by protecting the calcium pump ATP2A2 against the oxidoreductase ERO1A-mediated oxidative damage. Acts as a modulator of ryanodine receptor (RyR) activity: protects RyR from oxidation due to increased oxidative stress, or directly controls the RyR redox state, regulating the RyR-mediated calcium mobilization required for normal muscle development and differentiation. Plays an important role in muscle development and differentiation during early development. Required for development of the slow muscle fiber lineage. Required for the correct organization and attachment of the myofibrils, as well as for the continuity and integrity of the connective tissue that forms the myoseptum. In Danio rerio (Zebrafish), this protein is Selenoprotein N.